The following is a 305-amino-acid chain: Aspartate carbamoyltransferase catalytic subunit (305 aa).

The carbamoyl phosphate site is built by arginine 54 and threonine 55. Residue lysine 83 coordinates L-aspartate. 3 residues coordinate carbamoyl phosphate: arginine 104, histidine 132, and glutamine 135. Positions 165 and 226 each coordinate L-aspartate. 2 residues coordinate carbamoyl phosphate: leucine 265 and proline 266.

Belongs to the aspartate/ornithine carbamoyltransferase superfamily. ATCase family. As to quaternary structure, heterooligomer of catalytic and regulatory chains.

It catalyses the reaction carbamoyl phosphate + L-aspartate = N-carbamoyl-L-aspartate + phosphate + H(+). It functions in the pathway pyrimidine metabolism; UMP biosynthesis via de novo pathway; (S)-dihydroorotate from bicarbonate: step 2/3. Its function is as follows. Catalyzes the condensation of carbamoyl phosphate and aspartate to form carbamoyl aspartate and inorganic phosphate, the committed step in the de novo pyrimidine nucleotide biosynthesis pathway. In Pyrobaculum arsenaticum (strain DSM 13514 / JCM 11321 / PZ6), this protein is Aspartate carbamoyltransferase catalytic subunit.